Consider the following 212-residue polypeptide: Root-specific lectin (212 aa).

An N-terminal signal peptide occupies residues 1-26; that stretch reads MKMMSTRALALGAAAVLAFAAATAHA. At Gln-27 the chain carries Pyrrolidone carboxylic acid. 4 consecutive Chitin-binding type-1 domains span residues 27–68, 69–111, 112–154, and 155–197; these read QRCG…ACYT, SKRC…PCRA, DIKC…ACST, and DKPC…GCDG. 16 cysteine pairs are disulfide-bonded: Cys-29-Cys-44, Cys-38-Cys-50, Cys-43-Cys-57, Cys-61-Cys-66, Cys-72-Cys-87, Cys-81-Cys-93, Cys-86-Cys-100, Cys-104-Cys-109, Cys-115-Cys-130, Cys-124-Cys-136, Cys-129-Cys-143, Cys-147-Cys-152, Cys-158-Cys-173, Cys-167-Cys-179, Cys-172-Cys-186, and Cys-190-Cys-195. 36-38 is a substrate binding site; sequence MEC. Residue 88-99 participates in substrate binding; the sequence is SQWGYCGFGAEY. 140 to 141 is a binding site for substrate; it reads SE. Residue Asn-206 is glycosylated (N-linked (GlcNAc...) asparagine).

In terms of tissue distribution, in roots.

Functionally, carbohydrate binding. This is Root-specific lectin from Hordeum vulgare (Barley).